Consider the following 121-residue polypeptide: Large ribosomal subunit protein uL22 (121 aa).

It belongs to the universal ribosomal protein uL22 family. As to quaternary structure, part of the 50S ribosomal subunit.

Its function is as follows. This protein binds specifically to 23S rRNA; its binding is stimulated by other ribosomal proteins, e.g. L4, L17, and L20. It is important during the early stages of 50S assembly. It makes multiple contacts with different domains of the 23S rRNA in the assembled 50S subunit and ribosome. Functionally, the globular domain of the protein is located near the polypeptide exit tunnel on the outside of the subunit, while an extended beta-hairpin is found that lines the wall of the exit tunnel in the center of the 70S ribosome. The polypeptide is Large ribosomal subunit protein uL22 (Synechococcus sp. (strain CC9902)).